Here is a 561-residue protein sequence, read N- to C-terminus: Interleukin-1 receptor-like 2 (561 aa).

The first 21 residues, methionine 1 to alanine 21, serve as a signal peptide directing secretion. Ig-like C2-type domains lie at glycine 22–threonine 113, serine 128–tyrosine 215, and serine 225–alanine 321. Over glycine 22–arginine 338 the chain is Extracellular. 5 N-linked (GlcNAc...) asparagine glycosylation sites follow: asparagine 23, asparagine 43, asparagine 55, asparagine 111, and asparagine 130. Cysteine 44 and cysteine 97 are oxidised to a cystine. The cysteines at positions 149 and 199 are disulfide-linked. Residues asparagine 231, asparagine 237, asparagine 253, asparagine 269, asparagine 290, and asparagine 302 are each glycosylated (N-linked (GlcNAc...) asparagine). An intrachain disulfide couples cysteine 252 to cysteine 319. The helical transmembrane segment at alanine 339–isoleucine 358 threads the bilayer. At tyrosine 359–glycine 561 the chain is on the cytoplasmic side. In terms of domain architecture, TIR spans lysine 384–methionine 539. Glutamate 470 is a catalytic residue.

Belongs to the interleukin-1 receptor family. Interacts with IL1RAP; the association is enhanced by IL36B indicative for an functional signaling complex and inhibited by IL36RN. In terms of tissue distribution, predominant expression in the lung and epididymis, with lower expression in cerebral cortex and testis. Expression in the brain is non-neuronal and associated with the cerebral vasculature. Not detected in any cell line tested.

It is found in the membrane. The enzyme catalyses NAD(+) + H2O = ADP-D-ribose + nicotinamide + H(+). Its function is as follows. Receptor for interleukin-36 (IL36A, IL36B and IL36G). After binding to interleukin-36 associates with the coreceptor IL1RAP to form the interleukin-36 receptor complex which mediates interleukin-36-dependent activation of NF-kappa-B, MAPK and other pathways. The IL-36 signaling system is thought to be present in epithelial barriers and to take part in local inflammatory response; it is similar to the IL-1 system. Seems to be involved in skin inflammatory response by induction of the IL-23/IL-17/IL-22 pathway. Receptor for the interleukin IL36G. Binding to the agonist leads to the activation of NF-kappa-B. In Rattus norvegicus (Rat), this protein is Interleukin-1 receptor-like 2 (Il1rl2).